The chain runs to 204 residues: Large ribosomal subunit protein eL15 (204 aa).

Belongs to the eukaryotic ribosomal protein eL15 family.

The chain is Large ribosomal subunit protein eL15 (RPL15) from Tetrahymena thermophila (strain SB210).